Reading from the N-terminus, the 282-residue chain is Armadillo repeat-containing protein 1 (282 aa).

Met1 carries the N-acetylmethionine modification. An ARM repeat occupies Gly39–Gly81. Thr137 is subject to Phosphothreonine. 4 positions are modified to phosphoserine: Ser189, Ser246, Ser260, and Ser267. The interval Asp239 to His261 is disordered. Residues Ser246–Val255 show a composition bias toward basic and acidic residues.

In terms of assembly, interacts with mitochondrial contact site and cristae organizing system (MICOS) complex components IMMT/MIC60 and MICOS10/MIC10. Interacts with mitochondrial outer membrane sorting assembly machinery (SAM) complex components SAMM50 and MTX1.

The protein resides in the cytoplasm. It localises to the mitochondrion. Its subcellular location is the mitochondrion outer membrane. In terms of biological role, in association with mitochondrial contact site and cristae organizing system (MICOS) complex components and mitochondrial outer membrane sorting assembly machinery (SAM) complex components may regulate mitochondrial dynamics playing a role in determining mitochondrial length, distribution and motility. In Pongo abelii (Sumatran orangutan), this protein is Armadillo repeat-containing protein 1 (ARMC1).